The following is a 361-amino-acid chain: Queuine tRNA-ribosyltransferase (361 aa).

Residue D92 is the Proton acceptor of the active site. Substrate is bound by residues 92 to 96 (DSGGF), D146, Q189, and G216. The segment at 247-253 (GVGKPAD) is RNA binding. D266 acts as the Nucleophile in catalysis. The segment at 271–275 (TRSGR) is RNA binding; important for wobble base 34 recognition. Residues C304, C306, C309, and H335 each contribute to the Zn(2+) site.

Belongs to the queuine tRNA-ribosyltransferase family. Homodimer. Within each dimer, one monomer is responsible for RNA recognition and catalysis, while the other monomer binds to the replacement base PreQ1. It depends on Zn(2+) as a cofactor.

It carries out the reaction 7-aminomethyl-7-carbaguanine + guanosine(34) in tRNA = 7-aminomethyl-7-carbaguanosine(34) in tRNA + guanine. Its pathway is tRNA modification; tRNA-queuosine biosynthesis. Functionally, catalyzes the base-exchange of a guanine (G) residue with the queuine precursor 7-aminomethyl-7-deazaguanine (PreQ1) at position 34 (anticodon wobble position) in tRNAs with GU(N) anticodons (tRNA-Asp, -Asn, -His and -Tyr). Catalysis occurs through a double-displacement mechanism. The nucleophile active site attacks the C1' of nucleotide 34 to detach the guanine base from the RNA, forming a covalent enzyme-RNA intermediate. The proton acceptor active site deprotonates the incoming PreQ1, allowing a nucleophilic attack on the C1' of the ribose to form the product. After dissociation, two additional enzymatic reactions on the tRNA convert PreQ1 to queuine (Q), resulting in the hypermodified nucleoside queuosine (7-(((4,5-cis-dihydroxy-2-cyclopenten-1-yl)amino)methyl)-7-deazaguanosine). The protein is Queuine tRNA-ribosyltransferase of Rickettsia bellii (strain OSU 85-389).